The following is a 509-amino-acid chain: Histidine--tRNA ligase, cytoplasmic (509 aa).

Position 2 is an N-acetylalanine (alanine 2). Residues 3–59 form the WHEP-TRS domain; that stretch reads DRAALEELVRLQGAHVRGLKEQKASAEQIEEEVTKLLKLKAQLGQDEGKQKFVLKTP. Serine 66 is subject to Phosphoserine. L-histidine-binding positions include 130–132, arginine 157, glutamine 173, aspartate 177, arginine 326, and 330–331; these read DLT and YY. Residue serine 356 is modified to Phosphoserine.

The protein belongs to the class-II aminoacyl-tRNA synthetase family. In terms of assembly, homodimer.

It is found in the cytoplasm. It carries out the reaction tRNA(His) + L-histidine + ATP = L-histidyl-tRNA(His) + AMP + diphosphate + H(+). Functionally, catalyzes the ATP-dependent ligation of histidine to the 3'-end of its cognate tRNA, via the formation of an aminoacyl-adenylate intermediate (His-AMP). Plays a role in axon guidance. The polypeptide is Histidine--tRNA ligase, cytoplasmic (Hars1) (Mus musculus (Mouse)).